The following is a 480-amino-acid chain: Argininosuccinate lyase (480 aa).

Residues 1 to 17 (MTDTTPSADLGASSQQP) show a composition bias toward polar residues. Positions 1–24 (MTDTTPSADLGASSQQPAKAWSGR) are disordered.

Belongs to the lyase 1 family. Argininosuccinate lyase subfamily.

It localises to the cytoplasm. The enzyme catalyses 2-(N(omega)-L-arginino)succinate = fumarate + L-arginine. It participates in amino-acid biosynthesis; L-arginine biosynthesis; L-arginine from L-ornithine and carbamoyl phosphate: step 3/3. This chain is Argininosuccinate lyase, found in Azoarcus sp. (strain BH72).